The chain runs to 191 residues: Penicillin-binding protein activator LpoB (191 aa).

Positions 1 to 16 (MKRILFVILSTMLLAS) are cleaved as a signal peptide. C17 is lipidated: N-palmitoyl cysteine. C17 is lipidated: S-diacylglycerol cysteine. The disordered stretch occupies residues 25–48 (QPAPVTPVEPKEKQETTPIEPSEK).

The protein belongs to the LpoB family. Interacts with PBP1b.

The protein localises to the cell outer membrane. Its function is as follows. Regulator of peptidoglycan synthesis that is essential for the function of penicillin-binding protein 1B (PBP1b). This is Penicillin-binding protein activator LpoB from Xenorhabdus nematophila (strain ATCC 19061 / DSM 3370 / CCUG 14189 / LMG 1036 / NCIMB 9965 / AN6).